The following is a 486-amino-acid chain: Ribulose bisphosphate carboxylase large chain (486 aa).

Positions 126 and 176 each coordinate substrate. Lys-178 functions as the Proton acceptor in the catalytic mechanism. Lys-180 contacts substrate. 3 residues coordinate Mg(2+): Lys-204, Asp-206, and Glu-207. The residue at position 204 (Lys-204) is an N6-carboxylysine. Residue His-296 is the Proton acceptor of the active site. Substrate-binding residues include Arg-297, His-329, and Ser-381.

This sequence belongs to the RuBisCO large chain family. Type I subfamily. In terms of assembly, heterohexadecamer of 8 large chains and 8 small chains. Requires Mg(2+) as cofactor.

The catalysed reaction is 2 (2R)-3-phosphoglycerate + 2 H(+) = D-ribulose 1,5-bisphosphate + CO2 + H2O. The enzyme catalyses D-ribulose 1,5-bisphosphate + O2 = 2-phosphoglycolate + (2R)-3-phosphoglycerate + 2 H(+). Its function is as follows. RuBisCO catalyzes two reactions: the carboxylation of D-ribulose 1,5-bisphosphate, the primary event in carbon dioxide fixation, as well as the oxidative fragmentation of the pentose substrate. Both reactions occur simultaneously and in competition at the same active site. The sequence is that of Ribulose bisphosphate carboxylase large chain from Cupriavidus taiwanensis (strain DSM 17343 / BCRC 17206 / CCUG 44338 / CIP 107171 / LMG 19424 / R1) (Ralstonia taiwanensis (strain LMG 19424)).